The following is a 151-amino-acid chain: MTKTITPSSQGLDQKWYVIDATDQRLGRLACEVAKILRGKNKPTYTPHMDTGDFVIIINADKVAVTGRKSTQKLYRRHSGRPGGMKIETFEKLQQRIPERIIEKAVKGMLPKNALGRQLFTKLKVYPGPNHPHQAQKPEELTLNTIPNGDK.

The segment at 126 to 151 (YPGPNHPHQAQKPEELTLNTIPNGDK) is disordered. Residues 142 to 151 (TLNTIPNGDK) are compositionally biased toward polar residues.

It belongs to the universal ribosomal protein uL13 family. As to quaternary structure, part of the 50S ribosomal subunit.

Its function is as follows. This protein is one of the early assembly proteins of the 50S ribosomal subunit, although it is not seen to bind rRNA by itself. It is important during the early stages of 50S assembly. The polypeptide is Large ribosomal subunit protein uL13 (Crocosphaera subtropica (strain ATCC 51142 / BH68) (Cyanothece sp. (strain ATCC 51142))).